We begin with the raw amino-acid sequence, 255 residues long: 5'-nucleotidase SurE (255 aa).

The a divalent metal cation site is built by Asp8, Asp9, Ser40, and Asn92.

It belongs to the SurE nucleotidase family. The cofactor is a divalent metal cation.

The protein localises to the cytoplasm. The catalysed reaction is a ribonucleoside 5'-phosphate + H2O = a ribonucleoside + phosphate. Functionally, nucleotidase that shows phosphatase activity on nucleoside 5'-monophosphates. The polypeptide is 5'-nucleotidase SurE (Brucella canis (strain ATCC 23365 / NCTC 10854 / RM-666)).